Here is an 805-residue protein sequence, read N- to C-terminus: Leucine--tRNA ligase (805 aa).

Positions 40-51 match the 'HIGH' region motif; sequence PYPSGAGLHVGH. The 'KMSKS' region motif lies at 576–580; that stretch reads KMSKS. An ATP-binding site is contributed by lysine 579.

The protein belongs to the class-I aminoacyl-tRNA synthetase family.

The protein localises to the cytoplasm. It carries out the reaction tRNA(Leu) + L-leucine + ATP = L-leucyl-tRNA(Leu) + AMP + diphosphate. The chain is Leucine--tRNA ligase from Anoxybacillus flavithermus (strain DSM 21510 / WK1).